Consider the following 139-residue polypeptide: MQLVREKRGAHQHVPRKTTEPQKVRGDGICPERMSLLMMINWPFVDSTVHLETVDALMRYEGVQPPPFDPVNDSSRKYIMDRWIPWFVTNCERPSNTELYTLVSKIREDAIVFGASIVTTLTHLVPQREVRNKCRLKII.

Residues 1–26 form a disordered region; it reads MQLVREKRGAHQHVPRKTTEPQKVRG. Over residues 17-26 the composition is skewed to basic and acidic residues; sequence KTTEPQKVRG.

This is an uncharacterized protein from Ictalurid herpesvirus 1 (strain Auburn) (IcHV-1).